We begin with the raw amino-acid sequence, 28 residues long: GLKDWWNKHKDKIVEVVKEMGKAGLNAA.

A Methionine sulfoxide; in form U1-PONTX-Dq4d modification is found at Met-20. Residue Ala-28 is modified to Alanine amide; in form Dq-1362 and U1-PONTX-Dq4d.

In terms of processing, occurs in 3 forms, M-PONTX-Dq4b has an amidated Ala-28, U1-PONTX-Dq4d has an amidated Ala-28 and an oxidized Met-20, U1-PONTX-Dq4c has no modifications at either Met-20 or Ala-28. As to expression, expressed by the venom gland.

The protein resides in the secreted. M-poneritoxin-Dq4b: this synthetic peptide has antimicrobial activity against Gram-positive bacteria B.amyloliquefacies S499 (MIC=0.1 mM), L.monocytogenes 2231 and S.aureus ATCC 29213, against Gram-negative bacteria P.putida BTP1, P.aeruginosa PaO1 and E.coli ATCC 10536, and against the fungi S.cerevisiae, R.mucilaginosa and C.cucumerinum. Not active against the fungi F.oxysporum and B.cinerea. The chain is M-poneritoxin-Dq4b/U1-poneritoxin-Dq4c/U1-poneritoxin-Dq4d from Dinoponera quadriceps (South American ant).